The following is a 206-amino-acid chain: tRNA(Phe) 7-((3-amino-3-carboxypropyl)-4-demethylwyosine(37)-N(4))-methyltransferase 2 (206 aa).

The protein belongs to the TYW3 family.

The enzyme catalyses 4-demethyl-7-[(3S)-3-amino-3-carboxypropyl]wyosine(37) in tRNA(Phe) + S-adenosyl-L-methionine = 7-[(3S)-3-amino-3-carboxypropyl]wyosine(37) in tRNA(Phe) + S-adenosyl-L-homocysteine + H(+). Functionally, S-adenosyl-L-methionine-dependent methyltransferase that acts as a component of the wyosine derivatives biosynthesis pathway. Probably methylates N-4 position of wybutosine-86 to produce wybutosine-72. The polypeptide is tRNA(Phe) 7-((3-amino-3-carboxypropyl)-4-demethylwyosine(37)-N(4))-methyltransferase 2 (Pyrococcus abyssi (strain GE5 / Orsay)).